The chain runs to 320 residues: HPr kinase/phosphorylase (320 aa).

Residues H141 and K162 contribute to the active site. An ATP-binding site is contributed by 156–163 (GHSGLGKS). S163 is a Mg(2+) binding site. Catalysis depends on D180, which acts as the Proton acceptor; for phosphorylation activity. Proton donor; for dephosphorylation activity. The interval 204-213 (LEVRGLGILN) is important for the catalytic mechanism of both phosphorylation and dephosphorylation. A Mg(2+)-binding site is contributed by E205. R248 is an active-site residue. Positions 269–274 (PVAVGR) are important for the catalytic mechanism of dephosphorylation.

The protein belongs to the HPrK/P family. Homohexamer. The cofactor is Mg(2+).

The catalysed reaction is [HPr protein]-L-serine + ATP = [HPr protein]-O-phospho-L-serine + ADP + H(+). It catalyses the reaction [HPr protein]-O-phospho-L-serine + phosphate + H(+) = [HPr protein]-L-serine + diphosphate. Functionally, catalyzes the ATP- as well as the pyrophosphate-dependent phosphorylation of a specific serine residue in HPr, a phosphocarrier protein of the phosphoenolpyruvate-dependent sugar phosphotransferase system (PTS). HprK/P also catalyzes the pyrophosphate-producing, inorganic phosphate-dependent dephosphorylation (phosphorolysis) of seryl-phosphorylated HPr (P-Ser-HPr). The chain is HPr kinase/phosphorylase from Neisseria meningitidis serogroup B (strain ATCC BAA-335 / MC58).